Reading from the N-terminus, the 304-residue chain is uncharacterized protein (304 aa).

This is an uncharacterized protein from Acanthamoeba polyphaga (Amoeba).